The sequence spans 391 residues: 3-ketoacyl-CoA thiolase (391 aa).

Residue Cys95 is the Acyl-thioester intermediate of the active site. Residues His347 and Cys377 each act as proton acceptor in the active site.

This sequence belongs to the thiolase-like superfamily. Thiolase family. In terms of assembly, heterotetramer of two alpha chains (FadB) and two beta chains (FadA).

Its subcellular location is the cytoplasm. It catalyses the reaction an acyl-CoA + acetyl-CoA = a 3-oxoacyl-CoA + CoA. It participates in lipid metabolism; fatty acid beta-oxidation. In terms of biological role, catalyzes the final step of fatty acid oxidation in which acetyl-CoA is released and the CoA ester of a fatty acid two carbons shorter is formed. The chain is 3-ketoacyl-CoA thiolase from Pseudomonas fluorescens (strain ATCC BAA-477 / NRRL B-23932 / Pf-5).